Here is a 523-residue protein sequence, read N- to C-terminus: Glycerate kinase (523 aa).

Ser-60 bears the Phosphoserine mark. Lys-200 carries the N6-acetyllysine modification.

It belongs to the glycerate kinase type-2 family. In terms of tissue distribution, expressed in the hippocampus, callus, brain, cerebellum, renal cortex interstitial cells, epithelium of interlobular bile duct and skeletal muscle.

Its subcellular location is the cytoplasm. The enzyme catalyses (R)-glycerate + ATP = (2R)-3-phosphoglycerate + ADP + H(+). The protein is Glycerate kinase (Glyctk) of Mus musculus (Mouse).